The chain runs to 428 residues: Protein clpf-1 (428 aa).

ATP is bound by residues Glu-16, Arg-56, and 124–129 (DVGKTT).

Belongs to the Clp1 family. Clp1 subfamily.

Its subcellular location is the nucleus. Required for endonucleolytic cleavage during polyadenylation-dependent pre-mRNA 3'-end formation. The protein is Protein clpf-1 of Caenorhabditis elegans.